The chain runs to 777 residues: B3 domain-containing protein REM-like 1 (777 aa).

Residues 97 to 193 (FVTFTLAPVD…TPVLSLCFEE (97 aa)) constitute a DNA-binding region (TF-B3 1). Disordered stretches follow at residues 200 to 248 (VGEE…TSPS) and 344 to 391 (KSSS…ESSS). Residues 218–243 (KIVKDDNNKDESSTWKREGNHLRCKD) show a composition bias toward basic and acidic residues. Positions 252–347 (TLTVTITPDS…TPVLSIKSSS (96 aa)) form a DNA-binding region, TF-B3 2. Over residues 344–368 (KSSSGKGQSEFSKESLSIKPSSGNM) the composition is skewed to polar residues. Positions 370-388 (KKVENNREASRKYPPRSRE) are enriched in basic and acidic residues. DNA-binding regions (TF-B3) lie at residues 582–676 (FLTL…RDSS) and 683–777 (FLTL…FYTK).

The protein localises to the nucleus. The polypeptide is B3 domain-containing protein REM-like 1 (Arabidopsis thaliana (Mouse-ear cress)).